Here is a 166-residue protein sequence, read N- to C-terminus: Small ribosomal subunit protein bS18m (166 aa).

The N-terminal 31 residues, 1-31 (MLGRRIFSPAPNRGFILCNLIQSNNSTRRGF), are a transit peptide targeting the mitochondrion. The segment at 29–48 (RGFSDNRKFNERNSEASSNV) is disordered. Residues 30 to 42 (GFSDNRKFNERNS) show a composition bias toward basic and acidic residues.

This sequence belongs to the bacterial ribosomal protein bS18 family. As to quaternary structure, component of the mitochondrial small ribosomal subunit (mt-SSU). Mature yeast 74S mitochondrial ribosomes consist of a small (37S) and a large (54S) subunit. The 37S small subunit contains a 15S ribosomal RNA (15S mt-rRNA) and at least 32 different proteins. The 54S large subunit contains a 21S rRNA (21S mt-rRNA) and at least 45 different proteins.

Its subcellular location is the mitochondrion. Its function is as follows. Component of the mitochondrial ribosome (mitoribosome), a dedicated translation machinery responsible for the synthesis of mitochondrial genome-encoded proteins, including at least some of the essential transmembrane subunits of the mitochondrial respiratory chain. The mitoribosomes are attached to the mitochondrial inner membrane and translation products are cotranslationally integrated into the membrane. In Schizosaccharomyces pombe (strain 972 / ATCC 24843) (Fission yeast), this protein is Small ribosomal subunit protein bS18m (rsm18).